The sequence spans 187 residues: Chromophore lyase CpcS/CpeS 2 (187 aa).

Belongs to the CpcS/CpeS biliprotein lyase family.

In terms of biological role, covalently attaches a chromophore to Cys residue(s) of phycobiliproteins. The polypeptide is Chromophore lyase CpcS/CpeS 2 (Synechococcus sp. (strain JA-3-3Ab) (Cyanobacteria bacterium Yellowstone A-Prime)).